A 408-amino-acid chain; its full sequence is Putative ankyrin repeat protein L483 (408 aa).

ANK repeat units lie at residues 78–107 (SLNKCLIKSCKKNKLNIIKYLVSLGADIKA), 108–137 (GDDCAVQLASQNGHLEVIEYLVAQGANIRA), 139–167 (NDYAVIWASRNGYLDIVKYLVSQGADIRA), 168–197 (NNDYAVRWASRNGHLKVVKYLVSLGANIRT), 198–227 (ENDYAIKYASENGYLRIVEYLVSQGADIRA), 229–257 (NDYAVGLASSNGHFEVVEYLVSQGANIRV), 259–287 (NDYAVRLASSNGHLEVVKYLVSLRANIRA), 288–317 (RCDFAIKWSSSNGHLEVVKYLVSQGADIRS), 318–347 (QNDYAVRYASTNGHLEVVKYLVGQGADIRT), 349–377 (DDYAVRWASRGGCLEVVKYLVDQGANIRA), and 378–407 (KDDYAVKWASEKGHLEIVKFLISQGAVLTK).

The protein is Putative ankyrin repeat protein L483 of Acanthamoeba polyphaga (Amoeba).